The following is a 178-amino-acid chain: Lipid A deacylase PagL (178 aa).

A signal peptide spans 1 to 19; the sequence is MQFLKKNKPLFGIVTLALA. Residues His154, Ser156, and Asp168 each act as charge relay system in the active site.

Belongs to the PagL family. As to quaternary structure, homodimer.

The protein localises to the cell outer membrane. It catalyses the reaction a 3-(acyloxy)acyl derivative of bacterial toxin + H2O = a 3-hydroxyacyl derivative of bacterial toxin + a fatty acid + H(+). Its function is as follows. Has lipid A 3-O-deacylase activity. Hydrolyzes the ester bond at the 3 position of lipid A, a bioactive component of lipopolysaccharide (LPS), thereby releasing the primary fatty acyl moiety. This Bordetella bronchiseptica (strain ATCC BAA-588 / NCTC 13252 / RB50) (Alcaligenes bronchisepticus) protein is Lipid A deacylase PagL.